The sequence spans 1233 residues: Reverse gyrase 2 (1233 aa).

An RG N-terminal-type zinc finger spans residues 1–41; that stretch reads MNTIPSSNYLSSCPNCGRVISAERLYKGSVCSECLEEDREF. Zn(2+)-binding residues include Cys13, Cys16, Cys31, and Cys34. Residues Gln89 and 106–113 contribute to the ATP site; that span reads APPGLGKT. Residues 93 to 296 enclose the Helicase ATP-binding domain; sequence IIRVLRKESF…ALMGFRPGSS (204 aa). Positions 212 to 215 match the DEAD box motif; sequence DDVD. The tract at residues 606-1233 is topoisomerase I; the sequence is QKVKTVLFIV…DIYYEIKSIR (628 aa). Residues 610-774 enclose the Toprim domain; it reads TVLFIVESPN…NIKRAEFHEV (165 aa). Glu616 is a Mg(2+) binding site. The RG C-terminal-type; atypical zinc-finger motif lies at 691-720; the sequence is IKKCINGHQFTDFEQGNQCPKCHTTQIILD. The Zn(2+) site is built by Cys694, His698, Cys709, and Cys712. Residue Asp743 participates in Mg(2+) binding. Residues 790–1233 form the Topo IA-type catalytic domain; sequence NVNLVKSQIV…DIYYEIKSIR (444 aa). Tyr947 functions as the O-(5'-phospho-DNA)-tyrosine intermediate in the catalytic mechanism.

This sequence in the N-terminal section; belongs to the DEAD box helicase family. DDVD subfamily. In the C-terminal section; belongs to the type IA topoisomerase family. In terms of assembly, monomer. It depends on Zn(2+) as a cofactor. The cofactor is Mg(2+).

The protein localises to the cytoplasm. The enzyme catalyses ATP + H2O = ADP + phosphate + H(+). Modifies the topological state of DNA by introducing positive supercoils in an ATP-dependent process, increasing the linking number in steps of +1. Binds to single-stranded DNA, transiently cleaves and then rejoins the ends, introducing a positive supercoil in the process. The scissile phosphodiester is attacked by the catalytic tyrosine of the enzyme, resulting in the formation of a DNA-(5'-phosphotyrosyl)-enzyme intermediate. Probably involved in rewinding DNA strands in regions of the chromosome that have opened up to allow replication, transcription, DNA repair and/or for DNA protection. This chain is Reverse gyrase 2, found in Sulfurisphaera tokodaii (strain DSM 16993 / JCM 10545 / NBRC 100140 / 7) (Sulfolobus tokodaii).